Reading from the N-terminus, the 198-residue chain is Inner membrane-spanning protein YciB (198 aa).

5 helical membrane passes run 36–56, 67–87, 90–110, 135–155, and 162–182; these read IYSA…ALFI, LTLI…SETF, WKAP…HFIG, IAWI…AFTF, and FKVF…GIYL.

Belongs to the YciB family.

It is found in the cell inner membrane. Functionally, plays a role in cell envelope biogenesis, maintenance of cell envelope integrity and membrane homeostasis. The chain is Inner membrane-spanning protein YciB from Pseudomonas fluorescens (strain Pf0-1).